Here is a 441-residue protein sequence, read N- to C-terminus: Methionine aminopeptidase 2A (441 aa).

The interval Met-1–Gln-103 is disordered. Polar residues predominate over residues Ala-18–Thr-33. The segment covering Asp-37–Thr-62 has biased composition (basic and acidic residues). Over residues Lys-63–Ser-76 the composition is skewed to basic residues. His-194 contacts substrate. Asp-214, Asp-225, and His-294 together coordinate a divalent metal cation. His-302 provides a ligand contact to substrate. A divalent metal cation contacts are provided by Glu-327 and Glu-422.

The protein belongs to the peptidase M24A family. Methionine aminopeptidase eukaryotic type 2 subfamily. Requires Co(2+) as cofactor. Zn(2+) serves as cofactor. Mn(2+) is required as a cofactor. The cofactor is Fe(2+). As to expression, ubiquitous. Preferentially expressed in roots.

It localises to the cytoplasm. It catalyses the reaction Release of N-terminal amino acids, preferentially methionine, from peptides and arylamides.. Cotranslationally removes the N-terminal methionine from nascent proteins. The N-terminal methionine is often cleaved when the second residue in the primary sequence is small and uncharged (Met-Ala-, Cys, Gly, Pro, Ser, Thr, or Val). The protein is Methionine aminopeptidase 2A of Arabidopsis thaliana (Mouse-ear cress).